A 116-amino-acid polypeptide reads, in one-letter code: MRHRHAGKLLGRSYEHRKALYRNLMIALIEHKKIKTTLAKARAVQPEVEALISIAREDTPHARRMALSKLASKEAMRKLFTFAPTTYGGRNGGYTRITKLGPRRGDGAEMALIELI.

This sequence belongs to the bacterial ribosomal protein bL17 family. As to quaternary structure, part of the 50S ribosomal subunit. Contacts protein L32.

This chain is Large ribosomal subunit protein bL17, found in Chloroflexus aurantiacus (strain ATCC 29366 / DSM 635 / J-10-fl).